The primary structure comprises 930 residues: Protocadherin gamma-A4 (930 aa).

The first 27 residues, 1 to 27 (MAAPYKSDRRGLIWICIFLGSLCDIRA), serve as a signal peptide directing secretion. Cadherin domains are found at residues 28–132 (EQIR…APSF), 133–241 (GAQQ…APVF), 242–346 (TQPE…APEV), 347–451 (TVTS…PPTF), 452–561 (THAS…TPEI), and 569–682 (DGST…APID). Topologically, residues 28–691 (EQIRYSVPEE…DQEDSDITLY (664 aa)) are extracellular. N-linked (GlcNAc...) asparagine glycans are attached at residues N418 and N544. A helical transmembrane segment spans residues 692-712 (LVVAVAAVSCVFLAFVIVLLI). Residues 713-930 (HRLRRWHSTR…KKKSGKKEKK (218 aa)) lie on the Cytoplasmic side of the membrane. Disordered stretches follow at residues 803–839 (SSLQ…WPNN) and 900–930 (ATLT…KEKK). Residues 920–930 (NKKKSGKKEKK) are compositionally biased toward basic residues.

The protein resides in the cell membrane. In terms of biological role, potential calcium-dependent cell-adhesion protein. May be involved in the establishment and maintenance of specific neuronal connections in the brain. In Mus musculus (Mouse), this protein is Protocadherin gamma-A4.